Here is a 162-residue protein sequence, read N- to C-terminus: Cyclic pyranopterin monophosphate synthase (162 aa).

Substrate contacts are provided by residues 75–77 (LCH) and 113–114 (ME). Asp-128 is an active-site residue.

This sequence belongs to the MoaC family. In terms of assembly, homohexamer; trimer of dimers.

The catalysed reaction is (8S)-3',8-cyclo-7,8-dihydroguanosine 5'-triphosphate = cyclic pyranopterin phosphate + diphosphate. Its pathway is cofactor biosynthesis; molybdopterin biosynthesis. Its function is as follows. Catalyzes the conversion of (8S)-3',8-cyclo-7,8-dihydroguanosine 5'-triphosphate to cyclic pyranopterin monophosphate (cPMP). The sequence is that of Cyclic pyranopterin monophosphate synthase from Burkholderia orbicola (strain MC0-3).